A 423-amino-acid chain; its full sequence is UDP-N-acetylglucosamine 1-carboxyvinyltransferase 1 (423 aa).

Phosphoenolpyruvate is bound at residue 23 to 24; the sequence is KN. Arginine 96 serves as a coordination point for UDP-N-acetyl-alpha-D-glucosamine. Cysteine 120 acts as the Proton donor in catalysis. Cysteine 120 carries the 2-(S-cysteinyl)pyruvic acid O-phosphothioketal modification. Residues 125-129, aspartate 309, and valine 331 each bind UDP-N-acetyl-alpha-D-glucosamine; that span reads RPIDL.

The protein belongs to the EPSP synthase family. MurA subfamily.

It is found in the cytoplasm. It carries out the reaction phosphoenolpyruvate + UDP-N-acetyl-alpha-D-glucosamine = UDP-N-acetyl-3-O-(1-carboxyvinyl)-alpha-D-glucosamine + phosphate. It participates in cell wall biogenesis; peptidoglycan biosynthesis. In terms of biological role, cell wall formation. Adds enolpyruvyl to UDP-N-acetylglucosamine. This chain is UDP-N-acetylglucosamine 1-carboxyvinyltransferase 1, found in Streptococcus mutans serotype c (strain ATCC 700610 / UA159).